Reading from the N-terminus, the 394-residue chain is Elongation factor Tu 2 (394 aa).

One can recognise a tr-type G domain in the interval K10 to E204. A G1 region spans residues G19 to T26. Position 19–26 (G19–T26) interacts with GTP. Residue T26 coordinates Mg(2+). The G2 stretch occupies residues G60–S64. The interval D81 to G84 is G3. GTP-binding positions include D81–H85 and N136–D139. The interval N136 to D139 is G4. The tract at residues S174–L176 is G5.

This sequence belongs to the TRAFAC class translation factor GTPase superfamily. Classic translation factor GTPase family. EF-Tu/EF-1A subfamily. In terms of assembly, monomer.

Its subcellular location is the cytoplasm. It carries out the reaction GTP + H2O = GDP + phosphate + H(+). GTP hydrolase that promotes the GTP-dependent binding of aminoacyl-tRNA to the A-site of ribosomes during protein biosynthesis. This chain is Elongation factor Tu 2, found in Photobacterium profundum (strain SS9).